The following is a 1135-amino-acid chain: DNA-directed RNA polymerase I subunit RPA2 (1135 aa).

Residues 1 to 26 are disordered; that stretch reads MDVDGRWRNLPSGPSLKHLTDPSYGI. Position 180 (Arg180) interacts with RNA. Residues 194 to 208 are loop B; that stretch reads VRPKWKSRGLGYTQF. The tract at residues 236 to 247 is loop A; the sequence is LNFIYRKELFFL. Asp367 contributes to the RNA binding site. 2 fork loop regions span residues 439–453 and 474–489; these read LRSK…DSGL and RGAA…VRRL. A Mg(2+)-binding site is contributed by Asp755. An RNA-binding site is contributed by Lys890. DNA contacts are provided by Lys1020 and Arg1036. Ser1051 carries the phosphoserine modification. Zn(2+)-binding residues include Cys1070, Cys1073, Cys1098, and Cys1101. The C4-type zinc-finger motif lies at 1070 to 1101; it reads CVECGSLLSPLLEKPPPSWSAMRNRKYNCTVC.

It belongs to the RNA polymerase beta chain family. Component of the RNA polymerase I (Pol I) complex consisting of 13 subunits: a ten-subunit catalytic core composed of POLR1A/RPA1, POLR1B/RPA2, POLR1C/RPAC1, POLR1D/RPAC2, POLR1H/RPA12, POLR2E/RPABC1, POLR2F/RPABC2, POLR2H/RPABC3, POLR2K/RPABC4 and POLR2L/RPABC5; a mobile stalk subunit POLR1F/RPA43 protruding from the core and additional subunits homologous to general transcription factors POLR1E/RPA49 and POLR1G/RPA34. Part of Pol I pre-initiation complex (PIC), in which Pol I core assembles with RRN3 and promoter-bound UTBF and SL1/TIF-IB complex. The cofactor is Mg(2+).

The protein resides in the nucleus. The protein localises to the nucleolus. It is found in the chromosome. The catalysed reaction is RNA(n) + a ribonucleoside 5'-triphosphate = RNA(n+1) + diphosphate. Functionally, catalytic core component of RNA polymerase I (Pol I), a DNA-dependent RNA polymerase which synthesizes ribosomal RNA precursors using the four ribonucleoside triphosphates as substrates. Transcribes 47S pre-rRNAs from multicopy rRNA gene clusters, giving rise to 5.8S, 18S and 28S ribosomal RNAs. Pol I-mediated transcription cycle proceeds through transcription initiation, transcription elongation and transcription termination stages. During transcription initiation, Pol I pre-initiation complex (PIC) is recruited by the selectivity factor 1 (SL1/TIF-IB) complex bound to the core promoter that precedes an rDNA repeat unit. The PIC assembly bends the promoter favoring the formation of the transcription bubble and promoter escape. Once the polymerase has escaped from the promoter it enters the elongation phase during which RNA is actively polymerized, based on complementarity with the template DNA strand. Highly processive, assembles in structures referred to as 'Miller trees' where many elongating Pol I complexes queue and transcribe the same rDNA coding regions. At terminator sequences downstream of the rDNA gene, PTRF interacts with Pol I and halts Pol I transcription leading to the release of the RNA transcript and polymerase from the DNA. Forms Pol I active center together with the largest subunit POLR1A/RPA1. Appends one nucleotide at a time to the 3' end of the nascent RNA, with POLR1A/RPA1 contributing a Mg(2+)-coordinating DxDGD motif, and POLR1B/RPA2 participating in the coordination of a second Mg(2+) ion and providing lysine residues believed to facilitate Watson-Crick base pairing between the incoming nucleotide and the template base. Typically, Mg(2+) ions direct a 5' nucleoside triphosphate to form a phosphodiester bond with the 3' hydroxyl of the preceding nucleotide of the nascent RNA, with the elimination of pyrophosphate. Has proofreading activity: Pauses and backtracks to allow the cleavage of a missincorporated nucleotide via POLR1H/RPA12. High Pol I processivity is associated with decreased transcription fidelity. This chain is DNA-directed RNA polymerase I subunit RPA2, found in Mus musculus (Mouse).